The chain runs to 739 residues: NAD(P)H-quinone oxidoreductase subunit 5, chloroplastic (739 aa).

16 consecutive transmembrane segments (helical) span residues 9 to 29 (WIIP…LLLV), 39 to 59 (IWAF…ADLA), 89 to 109 (IDPL…MVLI), 125 to 145 (FAYM…SNLI), 147 to 167 (IYIF…FWFT), 185 to 205 (GDFG…SFEF), 224 to 244 (LFAA…SAQF), 258 to 278 (TPIS…FLVA), 280 to 300 (LLPL…IGII), 327 to 347 (LGYI…FHLI), 354 to 374 (ALLF…VGYS), 396 to 416 (TTFF…CFWS), 425 to 445 (WLYS…TAFY), 544 to 564 (LFPM…GIPF), 603 to 623 (IYSV…YGSV), and 719 to 739 (YIFL…FFSF).

Belongs to the complex I subunit 5 family. In terms of assembly, NDH is composed of at least 16 different subunits, 5 of which are encoded in the nucleus.

It localises to the plastid. It is found in the chloroplast thylakoid membrane. The enzyme catalyses a plastoquinone + NADH + (n+1) H(+)(in) = a plastoquinol + NAD(+) + n H(+)(out). The catalysed reaction is a plastoquinone + NADPH + (n+1) H(+)(in) = a plastoquinol + NADP(+) + n H(+)(out). Functionally, NDH shuttles electrons from NAD(P)H:plastoquinone, via FMN and iron-sulfur (Fe-S) centers, to quinones in the photosynthetic chain and possibly in a chloroplast respiratory chain. The immediate electron acceptor for the enzyme in this species is believed to be plastoquinone. Couples the redox reaction to proton translocation, and thus conserves the redox energy in a proton gradient. In Acorus calamus var. americanus (American sweet flag), this protein is NAD(P)H-quinone oxidoreductase subunit 5, chloroplastic (ndhF).